The chain runs to 156 residues: Protein OXIDATIVE STRESS 3 LIKE 3 (156 aa).

Residues 1 to 67 form a disordered region; the sequence is MHYQEQMESL…GLSKHYKGKS (67 aa). The segment covering 13–26 has biased composition (basic and acidic residues); that stretch reads GEERRRGNYTRDVD.

Its subcellular location is the nucleus. In terms of biological role, promotes slightly the tolerance to oxidizing chemicals (e.g. diamide). This Arabidopsis thaliana (Mouse-ear cress) protein is Protein OXIDATIVE STRESS 3 LIKE 3.